We begin with the raw amino-acid sequence, 158 residues long: tRNA (cytidine(34)-2'-O)-methyltransferase (158 aa).

S-adenosyl-L-methionine is bound by residues Gly103, Ile123, and Ser131.

The protein belongs to the class IV-like SAM-binding methyltransferase superfamily. RNA methyltransferase TrmH family. TrmL subfamily. As to quaternary structure, homodimer.

It localises to the cytoplasm. It catalyses the reaction cytidine(34) in tRNA + S-adenosyl-L-methionine = 2'-O-methylcytidine(34) in tRNA + S-adenosyl-L-homocysteine + H(+). It carries out the reaction 5-carboxymethylaminomethyluridine(34) in tRNA(Leu) + S-adenosyl-L-methionine = 5-carboxymethylaminomethyl-2'-O-methyluridine(34) in tRNA(Leu) + S-adenosyl-L-homocysteine + H(+). In terms of biological role, methylates the ribose at the nucleotide 34 wobble position in the two leucyl isoacceptors tRNA(Leu)(CmAA) and tRNA(Leu)(cmnm5UmAA). Catalyzes the methyl transfer from S-adenosyl-L-methionine to the 2'-OH of the wobble nucleotide. The chain is tRNA (cytidine(34)-2'-O)-methyltransferase from Ancylobacter novellus (strain ATCC 8093 / DSM 506 / JCM 20403 / CCM 1077 / IAM 12100 / NBRC 12443 / NCIMB 10456) (Starkeya novella).